The chain runs to 219 residues: Maleylacetoacetate isomerase (219 aa).

The GST N-terminal domain maps to 4-87 (NKTVLYSYWR…YLEETHPENP (84 aa)). Residues 14-19 (SSCSWR), glutamine 45, 71-72 (QS), glutamine 111, and 115-117 (NLK) each bind glutathione. The region spanning 92–217 (GSYERAIARQ…LPQNQPDAEP (126 aa)) is the GST C-terminal domain.

The protein belongs to the GST superfamily. Zeta family. Glutathione serves as cofactor.

It catalyses the reaction 4-maleylacetoacetate = 4-fumarylacetoacetate. It functions in the pathway amino-acid degradation; L-phenylalanine degradation; acetoacetate and fumarate from L-phenylalanine: step 5/6. This is Maleylacetoacetate isomerase (mai) from Dictyostelium discoideum (Social amoeba).